The sequence spans 412 residues: CCA-adding enzyme (412 aa).

Residues Ser-41 and Lys-44 each contribute to the ATP site. Residues Ser-41 and Lys-44 each contribute to the CTP site. Residues Asp-53, Asp-55, and Asp-106 each contribute to the Mg(2+) site. 3 residues coordinate ATP: His-129, Lys-149, and Tyr-158. Residues His-129, Lys-149, and Tyr-158 each coordinate CTP.

Belongs to the tRNA nucleotidyltransferase/poly(A) polymerase family. Archaeal CCA-adding enzyme subfamily. Homodimer. It depends on Mg(2+) as a cofactor.

The catalysed reaction is a tRNA precursor + 2 CTP + ATP = a tRNA with a 3' CCA end + 3 diphosphate. The enzyme catalyses a tRNA with a 3' CCA end + 2 CTP + ATP = a tRNA with a 3' CCACCA end + 3 diphosphate. Functionally, catalyzes the addition and repair of the essential 3'-terminal CCA sequence in tRNAs without using a nucleic acid template. Adds these three nucleotides in the order of C, C, and A to the tRNA nucleotide-73, using CTP and ATP as substrates and producing inorganic pyrophosphate. tRNA 3'-terminal CCA addition is required both for tRNA processing and repair. Also involved in tRNA surveillance by mediating tandem CCA addition to generate a CCACCA at the 3' terminus of unstable tRNAs. While stable tRNAs receive only 3'-terminal CCA, unstable tRNAs are marked with CCACCA and rapidly degraded. This Saccharolobus islandicus (strain Y.N.15.51 / Yellowstone #2) (Sulfolobus islandicus) protein is CCA-adding enzyme.